The primary structure comprises 64 residues: Large ribosomal subunit protein uL29 (64 aa).

Belongs to the universal ribosomal protein uL29 family.

The polypeptide is Large ribosomal subunit protein uL29 (Synechococcus elongatus (strain ATCC 33912 / PCC 7942 / FACHB-805) (Anacystis nidulans R2)).